We begin with the raw amino-acid sequence, 167 residues long: SsrA-binding protein (167 aa).

The tract at residues 144-167 (HDKRAADKEKQSKKEVRSAMAKYQ) is disordered. Residues 146 to 160 (KRAADKEKQSKKEVR) show a composition bias toward basic and acidic residues.

This sequence belongs to the SmpB family.

The protein localises to the cytoplasm. Required for rescue of stalled ribosomes mediated by trans-translation. Binds to transfer-messenger RNA (tmRNA), required for stable association of tmRNA with ribosomes. tmRNA and SmpB together mimic tRNA shape, replacing the anticodon stem-loop with SmpB. tmRNA is encoded by the ssrA gene; the 2 termini fold to resemble tRNA(Ala) and it encodes a 'tag peptide', a short internal open reading frame. During trans-translation Ala-aminoacylated tmRNA acts like a tRNA, entering the A-site of stalled ribosomes, displacing the stalled mRNA. The ribosome then switches to translate the ORF on the tmRNA; the nascent peptide is terminated with the 'tag peptide' encoded by the tmRNA and targeted for degradation. The ribosome is freed to recommence translation, which seems to be the essential function of trans-translation. In Synechococcus sp. (strain CC9902), this protein is SsrA-binding protein.